Consider the following 444-residue polypeptide: MVMLISLSLKKVIWMNVDPNLTKYMIKAKIYTDGVVEKPDVVGAIFGQTEGLLGDDLDLRDLQKSGKIGRIEVEIDSKKGRTEGYALIPSGLDQVETAILAAALETIDRIGPCKAKVEIANVEDVRVQKRQKIIERAKKIYQDMNSKGDDLSESLVKSVREEVEKSEIISYGEEKLPAGPAINDSDSIIVVEGRNDVLNLLKYGIKNTIAVQGTNIPETVKKLSKERTVTVFLDGDRGGDLILKEMLQVAEVDFVARAPPGTEVEELTYKQIVKALRYKTPIDQYLSMHGMNDELKEYSQRNNLVFTNHNSEQKKEVLEEPEAEKNEVLEQGEVTQQVSVPKEGYLDLLNPHDVSRRIEALSQLKTTEIYDSNGQRIASFPVAEAVDRIIQDPQGNTIVTGGIISQRLIDVAYNAGIKNIYGLKLGHITKKPVDINVIAWDRST.

The Toprim domain occupies Asp-186–Pro-260. 3 residues coordinate Mg(2+): Glu-192, Asp-234, and Asp-236.

This sequence belongs to the archaeal DnaG primase family. In terms of assembly, forms a ternary complex with MCM helicase and DNA. Component of the archaeal exosome complex. It depends on Mg(2+) as a cofactor.

It carries out the reaction ssDNA + n NTP = ssDNA/pppN(pN)n-1 hybrid + (n-1) diphosphate.. Its function is as follows. RNA polymerase that catalyzes the synthesis of short RNA molecules used as primers for DNA polymerase during DNA replication. Also part of the exosome, which is a complex involved in RNA degradation. Acts as a poly(A)-binding protein that enhances the interaction between heteromeric, adenine-rich transcripts and the exosome. The protein is DNA primase DnaG of Thermoplasma volcanium (strain ATCC 51530 / DSM 4299 / JCM 9571 / NBRC 15438 / GSS1).